A 79-amino-acid chain; its full sequence is Conotoxin Tr6.3 (79 aa).

An N-terminal signal peptide occupies residues 1–22; that stretch reads MKLTCVLIISVLFLTASQLITA. A propeptide spanning residues 23–47 is cleaved from the precursor; the sequence is VYSRDKQQYRAARLRDEMRNLKGAR. 3 cysteine pairs are disulfide-bonded: Cys-49–Cys-62, Cys-56–Cys-67, and Cys-61–Cys-77. 4-hydroxyproline is present on residues Pro-60 and Pro-63.

The protein belongs to the conotoxin O1 superfamily. Expressed by the venom duct.

Its subcellular location is the secreted. Functionally, ion channel inhibitor that inhibits the increase in intracellular calcium upon depolarization in DRG neurons. In vivo, both intraperitoneal and intracranial injections into mice induce hyperactivity. This is Conotoxin Tr6.3 from Conus terebra (Sea snail).